The following is a 137-amino-acid chain: Large ribosomal subunit protein uL16 (137 aa).

The protein belongs to the universal ribosomal protein uL16 family. In terms of assembly, part of the 50S ribosomal subunit.

Functionally, binds 23S rRNA and is also seen to make contacts with the A and possibly P site tRNAs. The sequence is that of Large ribosomal subunit protein uL16 from Rhodopseudomonas palustris (strain BisA53).